Consider the following 82-residue polypeptide: MQANIFVFAFLLLSVAVAAYGYQPECLEPSLYGCRGDEDATFGWTFDREDGGCRQGSYCTRFGQPKNYFRSERDCKKACGNA.

An N-terminal signal peptide occupies residues 1–21; the sequence is MQANIFVFAFLLLSVAVAAYG. Cystine bridges form between cysteine 26–cysteine 79, cysteine 34–cysteine 59, and cysteine 53–cysteine 75. The Cell attachment site motif lies at 35-37; it reads RGD.

As to expression, expressed in salivary glands.

The protein resides in the cytoplasmic vesicle. The protein localises to the secretory vesicle. It is found in the secreted. Tick salivary platelet aggregation inhibitor that plays an important part in the anti-hemostatic strategy of ticks. Inhibits platelet aggregation induced by ADP (IC(50)=130 nM), collagen, the thrombin receptor-activating peptide, and epinephrine, although platelets are activated and their shape changed. Binding to platelets is similar for resting and activated platelets (Kd=50-70 nM). Acts by specifically binding to platelet membrane glycoprotein IIb-IIIa (ITGA2B/ITGB3) in a divalent metal ion dependent manner. In contrast to many disintegrins which only interacts with the beta-3 subunit, this protein interacts with the two subunits (alpha-IIb and beta-3). Also causes disaggregation of aggregated platelets without influencing the activated spherical shape associated with aggregated platelets and causes a decrease in the number of pseudopodia on the activated platelet surface. Does not show any inhibitory activity for the different serine proteases tested. The protein is Savignygrin (+) of Ornithodoros kalahariensis (Tick).